Consider the following 419-residue polypeptide: L-rhamnose isomerase (419 aa).

Residues His-262, Asp-294, and Asp-296 each coordinate Mn(2+).

The protein belongs to the rhamnose isomerase family. In terms of assembly, homotetramer. Mn(2+) is required as a cofactor.

The protein localises to the cytoplasm. It carries out the reaction L-rhamnopyranose = L-rhamnulose. Its pathway is carbohydrate degradation; L-rhamnose degradation; glycerone phosphate from L-rhamnose: step 1/3. Its function is as follows. Catalyzes the interconversion of L-rhamnose and L-rhamnulose. The polypeptide is L-rhamnose isomerase (Salmonella gallinarum (strain 287/91 / NCTC 13346)).